The chain runs to 767 residues: RNA cytosine C(5)-methyltransferase NSUN2 (767 aa).

Residues 1-36 (MGRRSRGRRLQQQQRPEDAEDGAEGGGKRGEAGWEG) are disordered. Lys46 is covalently cross-linked (Glycyl lysine isopeptide (Lys-Gly) (interchain with G-Cter in SUMO2)). A Phosphoserine; by AURKB modification is found at Ser139. Residues 184–190 (CAAPGSK), Asp215, Asp242, and Asp268 contribute to the S-adenosyl-L-methionine site. The active-site Nucleophile is the Cys321. The tract at residues 436-481 (NKRQPKLQGKSAETRESTQLSPADLTEGKPTDPSKLESPSFTGTGD) is disordered. Ser456 bears the Phosphoserine mark. Positions 461–470 (TEGKPTDPSK) are enriched in basic and acidic residues. Residues Lys464 and Lys470 each participate in a glycyl lysine isopeptide (Lys-Gly) (interchain with G-Cter in SUMO2) cross-link. Ser473 is subject to Phosphoserine. Glycyl lysine isopeptide (Lys-Gly) (interchain with G-Cter in SUMO2) cross-links involve residues Lys511 and Lys516. An N6-acetyllysine; alternate modification is found at Lys586. The residue at position 586 (Lys586) is an N6-malonyllysine; alternate. Lys586 is covalently cross-linked (Glycyl lysine isopeptide (Lys-Gly) (interchain with G-Cter in SUMO2); alternate). Ser593 is subject to Phosphoserine. Glycyl lysine isopeptide (Lys-Gly) (interchain with G-Cter in SUMO2) cross-links involve residues Lys640, Lys654, and Lys660. Position 718 is a phosphothreonine (Thr718). The segment covering 719–730 (NESAASTGQPDN) has biased composition (polar residues). The disordered stretch occupies residues 719–767 (NESAASTGQPDNDVTEGQRAGEPNSPDAEEANSPDVTAGCDPAGVHPPR). Residues Ser724, Ser743, and Ser751 each carry the phosphoserine modification.

This sequence belongs to the class I-like SAM-binding methyltransferase superfamily. RsmB/NOP family. TRM4 subfamily. In terms of assembly, interacts with NPM1 and NCL during interphase; interaction is disrupted following phosphorylation at Ser-139. In terms of processing, phosphorylated at Ser-139 by AURKB during mitosis, leading to abolish methyltransferase activity and the interaction with NPM1. In terms of tissue distribution, expressed in adult and fetal brain and in lymphoblastoid cells.

The protein localises to the nucleus. Its subcellular location is the nucleolus. The protein resides in the cytoplasm. It is found in the mitochondrion. It localises to the cytoskeleton. The protein localises to the spindle. Its subcellular location is the secreted. The protein resides in the extracellular exosome. It carries out the reaction cytidine(48) in tRNA + S-adenosyl-L-methionine = 5-methylcytidine(48) in tRNA + S-adenosyl-L-homocysteine + H(+). The catalysed reaction is cytidine(49) in tRNA + S-adenosyl-L-methionine = 5-methylcytidine(49) in tRNA + S-adenosyl-L-homocysteine + H(+). The enzyme catalyses cytidine(50) in tRNA + S-adenosyl-L-methionine = 5-methylcytidine(50) in tRNA + S-adenosyl-L-homocysteine + H(+). It catalyses the reaction cytidine(34) in tRNA precursor + S-adenosyl-L-methionine = 5-methylcytidine(34) in tRNA precursor + S-adenosyl-L-homocysteine + H(+). It carries out the reaction a cytidine in mRNA + S-adenosyl-L-methionine = a 5-methylcytidine in mRNA + S-adenosyl-L-homocysteine + H(+). Its activity is regulated as follows. Inhibited by magnesium ions. In terms of biological role, RNA cytosine C(5)-methyltransferase that methylates cytosine to 5-methylcytosine (m5C) in various RNAs, such as tRNAs, mRNAs and some long non-coding RNAs (lncRNAs). Involved in various processes, such as epidermal stem cell differentiation, testis differentiation and maternal to zygotic transition during early development: acts by increasing protein synthesis; cytosine C(5)-methylation promoting tRNA stability and preventing mRNA decay. Methylates cytosine to 5-methylcytosine (m5C) at positions 34 and 48 of intron-containing tRNA(Leu)(CAA) precursors, and at positions 48, 49 and 50 of tRNA(Gly)(GCC) precursors. tRNA methylation is required generation of RNA fragments derived from tRNAs (tRFs). Also mediates C(5)-methylation of mitochondrial tRNAs. Catalyzes cytosine C(5)-methylation of mRNAs, leading to stabilize them and prevent mRNA decay: mRNA stabilization involves YBX1 that specifically recognizes and binds m5C-modified transcripts. Cytosine C(5)-methylation of mRNAs also regulates mRNA export: methylated transcripts are specifically recognized by THOC4/ALYREF, which mediates mRNA nucleo-cytoplasmic shuttling. Also mediates cytosine C(5)-methylation of non-coding RNAs, such as vault RNAs (vtRNAs), promoting their processing into regulatory small RNAs. Cytosine C(5)-methylation of vtRNA VTRNA1.1 promotes its processing into small-vault RNA4 (svRNA4) and regulates epidermal differentiation. May act downstream of Myc to regulate epidermal cell growth and proliferation. Required for proper spindle assembly and chromosome segregation, independently of its methyltransferase activity. This is RNA cytosine C(5)-methyltransferase NSUN2 from Homo sapiens (Human).